Reading from the N-terminus, the 893-residue chain is Alpha-actinin-1 (893 aa).

Residues 1-248 (MDHHYDPQQT…IMTYVSSFYH (248 aa)) are actin-binding. The residue at position 13 (Tyr-13) is a Phosphotyrosine; by FAK1. Calponin-homology (CH) domains lie at 32-136 (KQQR…LRFA) and 145-251 (TSAK…HAFS). Spectrin repeat units lie at residues 275–385 (QLME…WLLN), 395–500 (HLAE…ALER), 510–621 (QLYL…ALME), and 631–734 (RLRK…EVEN). 2 consecutive EF-hand domains span residues 747-782 (EQMN…LGYD) and 788-823 (QGEA…ETAD). Residues Asp-760, Asp-762, Ser-764, Thr-766, and Glu-771 each contribute to the Ca(2+) site.

Belongs to the alpha-actinin family. As to quaternary structure, homodimer; antiparallel. Interacts with PDLIM4 (via PDZ domain).

The protein resides in the cytoplasm. The protein localises to the cytoskeleton. It localises to the myofibril. It is found in the sarcomere. Its subcellular location is the z line. The protein resides in the cell membrane. The protein localises to the cell junction. It localises to the cell projection. It is found in the ruffle. F-actin cross-linking protein is thought to anchor actin to a variety of intracellular structures. This is a bundling protein. This chain is Alpha-actinin-1 (ACTN1), found in Gallus gallus (Chicken).